A 333-amino-acid polypeptide reads, in one-letter code: Torsin-1A (333 aa).

An N-terminal signal peptide occupies residues 1 to 20 (MKLGRATLALLLLVPCVVRA). The interaction with SNAPIN stretch occupies residues 92-252 (KPKKPLTLSL…VSVFNNKNSG (161 aa)). Asn144 and Asn159 each carry an N-linked (GlcNAc...) asparagine glycan. The interval 252 to 333 (GFWHSSLIDR…FTKLDYYLDD (82 aa)) is interaction with KLC1. Positions 313–333 (KVFSDKGCKTVFTKLDYYLDD) are interaction with SYNE3.

It belongs to the ClpA/ClpB family. Torsin subfamily. In terms of assembly, homohexamer. Interacts with TOR1B; the interaction may be specific of neural tissues. Interacts (ATP-bound) with TOR1AIP1 and TOR1AIP2; the interactions induce ATPase activity. Interacts with KLHL14; preferentially when ATP-free. Interacts with KLC1 (via TPR repeats); the interaction associates TOR1A with the kinesin oligomeric complex. Interacts with COPS4; the interaction associates TOR1A with the CSN complex. Interacts with SNAPIN; the interaction is direct and associates SNAPIN with the CSN complex. Interacts with STON2. Interacts (ATP-bound) with SYNE3 (via KASH domain); the interaction is required for SYNE3 nuclear envelope localization. Interacts with VIM; the interaction associates TOR1A with the cytoskeleton. Interacts with PLEC. Interacts (ATP-bound) with SLC6A3; regulates SLC6A3 transport to the plasma membrane. N-glycosylated. As to expression, expressed in brain (at protein level).

Its subcellular location is the endoplasmic reticulum lumen. The protein localises to the nucleus inner membrane. The protein resides in the cell projection. It is found in the growth cone. It localises to the cytoplasmic vesicle membrane. Its subcellular location is the cytoplasmic vesicle. The protein localises to the secretory vesicle. The protein resides in the synaptic vesicle. The catalysed reaction is ATP + H2O = ADP + phosphate + H(+). In terms of biological role, protein with chaperone functions important for the control of protein folding, processing, stability and localization as well as for the reduction of misfolded protein aggregates. Involved in the regulation of synaptic vesicle recycling, controls STON2 protein stability in collaboration with the COP9 signalosome complex (CSN). In the nucleus, may link the cytoskeleton with the nuclear envelope, this mechanism seems to be crucial for the control of nuclear polarity, cell movement and, specifically in neurons, nuclear envelope integrity. Participates in the cellular trafficking and may regulate the subcellular location of multipass membrane proteins such as the dopamine transporter SLC6A3, leading to the modulation of dopamine neurotransmission. In the endoplasmic reticulum, plays a role in the quality control of protein folding by increasing clearance of misfolded proteins such as SGCE variants or holding them in an intermediate state for proper refolding. May have a redundant function with TOR1B in non-neural tissues. This chain is Torsin-1A (Tor1a), found in Rattus norvegicus (Rat).